The primary structure comprises 247 residues: RNA-free ribonuclease P (247 aa).

Belongs to the HARP family.

It catalyses the reaction Endonucleolytic cleavage of RNA, removing 5'-extranucleotides from tRNA precursor.. In terms of biological role, RNA-free RNase P that catalyzes the removal of the 5'-leader sequence from pre-tRNA to produce the mature 5'-terminus. In Methanosarcina mazei (strain ATCC BAA-159 / DSM 3647 / Goe1 / Go1 / JCM 11833 / OCM 88) (Methanosarcina frisia), this protein is RNA-free ribonuclease P.